Consider the following 257-residue polypeptide: 5'-nucleotidase SurE (257 aa).

Positions 9, 10, 42, and 96 each coordinate a divalent metal cation.

Belongs to the SurE nucleotidase family. Requires a divalent metal cation as cofactor.

The protein localises to the cytoplasm. It catalyses the reaction a ribonucleoside 5'-phosphate + H2O = a ribonucleoside + phosphate. Functionally, nucleotidase that shows phosphatase activity on nucleoside 5'-monophosphates. This chain is 5'-nucleotidase SurE, found in Campylobacter lari (strain RM2100 / D67 / ATCC BAA-1060).